We begin with the raw amino-acid sequence, 263 residues long: Small ribosomal subunit protein eS4 (263 aa).

Residues 42–104 (LPLIVFLRNR…TGEHFRLVYD (63 aa)) enclose the S4 RNA-binding domain.

It belongs to the eukaryotic ribosomal protein eS4 family.

This is Small ribosomal subunit protein eS4 (RPS4Y1) from Gorilla gorilla gorilla (Western lowland gorilla).